The following is a 684-amino-acid chain: Beta-taxilin (684 aa).

Residues 1–26 are compositionally biased toward polar residues; that stretch reads MEANHSEQLSAERQSTPPGDSSSLPS. Positions 1 to 132 are disordered; sequence MEANHSEQLS…KEPVSNKEQK (132 aa). A compositionally biased stretch (basic and acidic residues) spans 45-64; that stretch reads PEKEASVHPDISEELNRQLE. Acidic residues predominate over residues 93–107; sequence ESPDNEDGDCEETTE. Coiled-coil stretches lie at residues 135–351 and 378–467; these read KKIL…VLKE and NEVF…SEKD. A compositionally biased stretch (basic and acidic residues) spans 458–475; it reads IRDAEISEKDDQSQHNSD. Disordered regions lie at residues 458–485, 514–632, and 646–684; these read IRDA…VSVD, ESTP…DVPA, and PACE…EGVD. Phosphoserine is present on residues S474 and S483. Over residues 514–524 the composition is skewed to basic and acidic residues; the sequence is ESTPHQSKETQ. Residues 613–622 are compositionally biased toward polar residues; that stretch reads QAPQAPTEAS.

The protein belongs to the taxilin family. In terms of assembly, binds to the C-terminal coiled coil region of syntaxin family members STX1A, STX3A and STX4A. Has a preference for STX1A. Expressed in skeletal muscle.

Functionally, promotes motor nerve regeneration. May be involved in intracellular vesicle traffic. The sequence is that of Beta-taxilin (TXLNB) from Homo sapiens (Human).